A 215-amino-acid chain; its full sequence is CASP-like protein 1U3 (215 aa).

Over 1-13 the chain is Cytoplasmic; sequence MHDEEKKEPKWVT. The chain crosses the membrane as a helical span at residues 14-34; that stretch reads AVSIAGRIAGMGLAVAAAVLM. Residues 35-68 are Extracellular-facing; sequence STASQCTVYYAAPAASAYGGAARARTVTYSDFPP. The helical transmembrane segment at 69 to 89 threads the bilayer; sequence FVFLVGAASIAAFLEAIAIFL. Over 90 to 105 the chain is Cytoplasmic; it reads VVWKKGKDKTTKVLMP. A helical transmembrane segment spans residues 106–126; sequence LLGVAVPALLYSATGAAFAAV. Residues 127-161 lie on the Extracellular side of the membrane; it reads SDMSYCSANGKRVSICAGSAAAGGGVSGGTNFCSQ. Residues 162 to 182 form a helical membrane-spanning segment; sequence VHIAVYLSLAAAVAVSVAEVV. The Cytoplasmic portion of the chain corresponds to 183–215; sequence RGLGGSASGGGSDSDSSSSSESGGCDHGCHHKH. A disordered region spans residues 187 to 215; it reads GSASGGGSDSDSSSSSESGGCDHGCHHKH. Over residues 195–205 the composition is skewed to low complexity; it reads DSDSSSSSESG.

This sequence belongs to the Casparian strip membrane proteins (CASP) family. In terms of assembly, homodimer and heterodimers.

It is found in the cell membrane. The sequence is that of CASP-like protein 1U3 from Sorghum bicolor (Sorghum).